The primary structure comprises 95 residues: Cytochrome b-c1 complex subunit 8, mitochondrial (95 aa).

A helical transmembrane segment spans residues Phe-57 to Ala-74.

This sequence belongs to the UQCRQ/QCR8 family. In terms of assembly, component of the ubiquinol-cytochrome c oxidoreductase (cytochrome b-c1 complex, complex III, CIII), a multisubunit enzyme composed of 10 subunits. The complex is composed of 3 respiratory subunits cytochrome b (COB), cytochrome c1 (CYT1) and Rieske protein (RIP1), 2 core protein subunits COR1 and QCR2, and 5 low-molecular weight protein subunits QCR6, QCR7, QCR8, QCR9 and QCR10. The complex exists as an obligatory dimer and forms supercomplexes (SCs) in the inner mitochondrial membrane with a monomer or a dimer of cytochrome c oxidase (complex IV, CIV), resulting in 2 different assemblies (supercomplexes III(2)IV and III(2)IV(2)).

It localises to the membrane. Its subcellular location is the mitochondrion inner membrane. Functionally, component of the ubiquinol-cytochrome c oxidoreductase, a multisubunit transmembrane complex that is part of the mitochondrial electron transport chain which drives oxidative phosphorylation. The complex plays an important role in the uptake of multiple carbon sources present in different host niches. The protein is Cytochrome b-c1 complex subunit 8, mitochondrial of Candida albicans (strain SC5314 / ATCC MYA-2876) (Yeast).